Consider the following 108-residue polypeptide: Ribonuclease P protein component (108 aa).

It belongs to the RnpA family. As to quaternary structure, consists of a catalytic RNA component (M1 or rnpB) and a protein subunit.

It carries out the reaction Endonucleolytic cleavage of RNA, removing 5'-extranucleotides from tRNA precursor.. RNaseP catalyzes the removal of the 5'-leader sequence from pre-tRNA to produce the mature 5'-terminus. It can also cleave other RNA substrates such as 4.5S RNA. The protein component plays an auxiliary but essential role in vivo by binding to the 5'-leader sequence and broadening the substrate specificity of the ribozyme. This is Ribonuclease P protein component from Campylobacter jejuni subsp. doylei (strain ATCC BAA-1458 / RM4099 / 269.97).